We begin with the raw amino-acid sequence, 105 residues long: Ketoisovalerate oxidoreductase subunit VorD (105 aa).

2 consecutive 4Fe-4S ferredoxin-type domains span residues 44-73 (FKPV…IKPD) and 74-103 (GYVA…MIKE). The [4Fe-4S] cluster site is built by Cys53, Cys56, Cys59, Cys63, Cys83, Cys86, Cys89, and Cys93.

Heterotetramer of one alpha, one beta, one delta and one gamma chain. It depends on [4Fe-4S] cluster as a cofactor.

The catalysed reaction is 3-methyl-2-oxobutanoate + 2 oxidized [2Fe-2S]-[ferredoxin] + CoA = 2-methylpropanoyl-CoA + 2 reduced [2Fe-2S]-[ferredoxin] + CO2 + H(+). The protein is Ketoisovalerate oxidoreductase subunit VorD (vorD) of Pyrococcus furiosus (strain ATCC 43587 / DSM 3638 / JCM 8422 / Vc1).